The sequence spans 246 residues: Type III pantothenate kinase (246 aa).

6–13 (DVGNTHSV) contributes to the ATP binding site. 103–106 (GADR) contributes to the substrate binding site. Aspartate 105 (proton acceptor) is an active-site residue. Aspartate 125 contacts K(+). Residue threonine 128 coordinates ATP. Substrate is bound at residue threonine 179.

The protein belongs to the type III pantothenate kinase family. Homodimer. The cofactor is NH4(+). K(+) serves as cofactor.

The protein localises to the cytoplasm. The catalysed reaction is (R)-pantothenate + ATP = (R)-4'-phosphopantothenate + ADP + H(+). It participates in cofactor biosynthesis; coenzyme A biosynthesis; CoA from (R)-pantothenate: step 1/5. In terms of biological role, catalyzes the phosphorylation of pantothenate (Pan), the first step in CoA biosynthesis. This is Type III pantothenate kinase (coaX) from Thermotoga maritima (strain ATCC 43589 / DSM 3109 / JCM 10099 / NBRC 100826 / MSB8).